The chain runs to 241 residues: Eukaryotic translation initiation factor 3 subunit J (241 aa).

A disordered region spans residues 1-94 (MDVSWDADNF…EKTAEEMTPE (94 aa)). Acidic residues predominate over residues 26-45 (GEDEDDNVKESWEDEEEEKK). The stretch at 61 to 118 (KKKIHDKIAERERQEREKAERLVTEKTAEEMTPEQKLAEKLRQQKLQEESDLRLAMET) forms a coiled coil. Positions 66-89 (DKIAERERQEREKAERLVTEKTAE) are enriched in basic and acidic residues.

The protein belongs to the eIF-3 subunit J family. In terms of assembly, component of the eukaryotic translation initiation factor 3 (eIF-3) complex.

It localises to the cytoplasm. In terms of biological role, component of the eukaryotic translation initiation factor 3 (eIF-3) complex, which is involved in protein synthesis of a specialized repertoire of mRNAs and, together with other initiation factors, stimulates binding of mRNA and methionyl-tRNAi to the 40S ribosome. The eIF-3 complex specifically targets and initiates translation of a subset of mRNAs involved in cell proliferation. The sequence is that of Eukaryotic translation initiation factor 3 subunit J from Bombyx mori (Silk moth).